The following is a 250-amino-acid chain: tRNA (guanine-N(7)-)-methyltransferase (250 aa).

Residues 1-10 (MTPDDPRDAS) are compositionally biased toward basic and acidic residues. Residues 1-30 (MTPDDPRDASDASLADATADSASRGHGSFF) form a disordered region. Residues 11–24 (DASLADATADSASR) show a composition bias toward low complexity. Positions 79, 104, 131, and 153 each coordinate S-adenosyl-L-methionine. Residue Asp-153 is part of the active site. Positions 157 and 189 each coordinate substrate.

This sequence belongs to the class I-like SAM-binding methyltransferase superfamily. TrmB family.

The catalysed reaction is guanosine(46) in tRNA + S-adenosyl-L-methionine = N(7)-methylguanosine(46) in tRNA + S-adenosyl-L-homocysteine. The protein operates within tRNA modification; N(7)-methylguanine-tRNA biosynthesis. Functionally, catalyzes the formation of N(7)-methylguanine at position 46 (m7G46) in tRNA. In Rhodopseudomonas palustris (strain BisA53), this protein is tRNA (guanine-N(7)-)-methyltransferase.